The primary structure comprises 270 residues: Putative carbamate hydrolase RutD (270 aa).

This sequence belongs to the AB hydrolase superfamily. Hydrolase RutD family.

It carries out the reaction carbamate + 2 H(+) = NH4(+) + CO2. Its function is as follows. Involved in pyrimidine catabolism. May facilitate the hydrolysis of carbamate, a reaction that can also occur spontaneously. This chain is Putative carbamate hydrolase RutD, found in Escherichia coli (strain SMS-3-5 / SECEC).